The sequence spans 214 residues: DNA-binding protein HupB (214 aa).

Lys3 bears the N6-acetyllysine mark. Lys3 carries the N6-succinyllysine modification. Thr43 and Thr45 each carry phosphothreonine. N6-acetyllysine is present on residues Lys72, Lys86, and Lys103. The disordered stretch occupies residues 100–214; the sequence is PAVKRGVGAS…KKATARRGRK (115 aa). Residues 102 to 112 are compositionally biased toward low complexity; the sequence is VKRGVGASAAK. Lys113 carries the post-translational modification N6-succinyllysine. Residues 113-214 are compositionally biased toward basic residues; it reads KVAKKAPAKK…KKATARRGRK (102 aa). Residues Lys116 and Lys133 each carry the N6-acetyllysine modification. N6-succinyllysine is present on Lys142. Residues Lys146 and Lys167 each carry the N6-acetyllysine modification.

The protein belongs to the bacterial histone-like protein family. Long actinobacterial subfamily. Oligomerizes. Homodimer; the crystallized protein is missing the C-terminal 105 residues. Interacts with topoisomerase 1 (topA). Interacts with Eis. Interacts with NAD-dependent protein deacylase NPD (MRA_1161). Interacts with MRA_0812 CoA transferase. Phosphorylated in vivo on Ser and Thr-residues; the protein is degraded during purification so most sites were not identified, but at least one of Thr-43 and/or Thr-45 are modified in vivo. In vitro at least PknE, PknF and PknB phosphorylate HupB; PknE is the most active and phosphorylates many sites in vitro including Thr-43 and Thr-45. Post-translationally, acetylated on 8 Lys residues in vivo (probably by Eis). In vitro acetylated by Eis on 28 residues (strains H37Rv and H37Ra), many more than those identified in vivo. Also acetylated by MRA_0812. Deacetylated in vitro by NAD-dependent protein deacylase NPD (MRA_1161). In terms of processing, succinylated in vivo and in vitro by MRA_0812 and by Eis; only 3 residues are found to be succinylated in vivo, while 27 are modifed in vitro by MRA_0812 and 32 are succinylated by Eis. NAD-dependent protein deacylase (MRA_1161) desuccinylates this protein.

The protein resides in the cytoplasm. The protein localises to the nucleoid. It catalyses the reaction 4 Fe(2+) + O2 + 4 H(+) = 4 Fe(3+) + 2 H2O. With respect to regulation, two trans-stilbene derivatives, 4,4'-[(E)-ethene-1,2 diylbis({5[(phenylcarbonyl)amino]benzene-2,1-diyl}sulfonylimino)] dibenzoic acid and its methoxy derivative 4,4'-[1,2-ethenediylbis({5-[(4-methoxybenzoyl)amino]-2,1phenylene}sulfonylimino)] dibenzoic acid, respectively SD1 and SD4, inhibit DNA binding with 50% inhibition at 20 uM for SD1 and 1.7 uM for SD4. SD1 and SD4 have minimal inhibitory concentrations of 400 and 800 uM on strain H37Ra respectively. Its function is as follows. A nucleoid-associated protein (NAP) that plays a role in local chromosome architecture. Binds DNA non-sequence specifically; in vitro phosphorylation of an N-terminal fragment decreases DNA-binding. Stimulates supercoiling relaxation by topoisomerase 1 (Top1, topA), at higher than 80 uM inhibits relaxation, has no effect on DNA gyrase; the effect is independent of DNA-binding. Increases the intervening strand passage activity of Top1 that occurs between the two catalytic trans-esterification reactions. Does not bind ssDNA, probably helps condense chromosomes. Binds dsDNA; in vitro acetylated protein binds 10-fold less well to DNA (note in vitro acetylated protein is more heavily modified than in vivo modified protein). In vitro acetylated protein compacts DNA less well than unmodified protein. In vitro succinylated DNA bind dsDNA less well than unmodified protein (note in vitro succinylated protein is more heavily modified than in vivo modified protein). In terms of biological role, has ferroxidase activity, converts Fe(2+) into Fe(3+). Binds Fe(3+) but not Fe(2+); prevents the generation of hydroxyl radicals by the Fenton reaction and thus protects DNA from damage. May function in iron storage. Functionally, required for biofilm formation; trimethylation by recombinant human SUV39H1 (a histone methyltransferase) inhibits biofilm formation. Probably influences transcription. RNase E and HupB jointly contribute to cellular adaptation to changing growth conditions and survival during antibiotic treatment and in the host. In Mycobacterium tuberculosis (strain ATCC 25177 / H37Ra), this protein is DNA-binding protein HupB.